The following is a 261-amino-acid chain: Cytochrome c oxidase subunit 3 (261 aa).

The Mitochondrial matrix portion of the chain corresponds to M1–P15. The chain crosses the membrane as a helical span at residues W16–W34. Residues F35–L40 lie on the Mitochondrial intermembrane side of the membrane. A helical transmembrane segment spans residues T41–T66. The Mitochondrial matrix portion of the chain corresponds to F67 to T72. A helical transmembrane segment spans residues P73–S105. Residues L106–E128 are Mitochondrial intermembrane-facing. The helical transmembrane segment at V129–M152 threads the bilayer. The Mitochondrial matrix portion of the chain corresponds to E153–E155. The chain crosses the membrane as a helical span at residues R156–E183. At A184 to D190 the chain is on the mitochondrial intermembrane side. The helical transmembrane segment at G191 to V223 threads the bilayer. Residues Q224–H232 lie on the Mitochondrial matrix side of the membrane. Residues F233–I256 traverse the membrane as a helical segment. Residues Y257–S261 lie on the Mitochondrial intermembrane side of the membrane.

Belongs to the cytochrome c oxidase subunit 3 family. Component of the cytochrome c oxidase (complex IV, CIV), a multisubunit enzyme composed of 14 subunits. The complex is composed of a catalytic core of 3 subunits MT-CO1, MT-CO2 and MT-CO3, encoded in the mitochondrial DNA, and 11 supernumerary subunits COX4I, COX5A, COX5B, COX6A, COX6B, COX6C, COX7A, COX7B, COX7C, COX8 and NDUFA4, which are encoded in the nuclear genome. The complex exists as a monomer or a dimer and forms supercomplexes (SCs) in the inner mitochondrial membrane with NADH-ubiquinone oxidoreductase (complex I, CI) and ubiquinol-cytochrome c oxidoreductase (cytochrome b-c1 complex, complex III, CIII), resulting in different assemblies (supercomplex SCI(1)III(2)IV(1) and megacomplex MCI(2)III(2)IV(2)).

It is found in the mitochondrion inner membrane. The catalysed reaction is 4 Fe(II)-[cytochrome c] + O2 + 8 H(+)(in) = 4 Fe(III)-[cytochrome c] + 2 H2O + 4 H(+)(out). In terms of biological role, component of the cytochrome c oxidase, the last enzyme in the mitochondrial electron transport chain which drives oxidative phosphorylation. The respiratory chain contains 3 multisubunit complexes succinate dehydrogenase (complex II, CII), ubiquinol-cytochrome c oxidoreductase (cytochrome b-c1 complex, complex III, CIII) and cytochrome c oxidase (complex IV, CIV), that cooperate to transfer electrons derived from NADH and succinate to molecular oxygen, creating an electrochemical gradient over the inner membrane that drives transmembrane transport and the ATP synthase. Cytochrome c oxidase is the component of the respiratory chain that catalyzes the reduction of oxygen to water. Electrons originating from reduced cytochrome c in the intermembrane space (IMS) are transferred via the dinuclear copper A center (CU(A)) of subunit 2 and heme A of subunit 1 to the active site in subunit 1, a binuclear center (BNC) formed by heme A3 and copper B (CU(B)). The BNC reduces molecular oxygen to 2 water molecules using 4 electrons from cytochrome c in the IMS and 4 protons from the mitochondrial matrix. In Oncorhynchus mykiss (Rainbow trout), this protein is Cytochrome c oxidase subunit 3 (mt-co3).